Reading from the N-terminus, the 128-residue chain is Ribonuclease P protein component 4 (128 aa).

4 residues coordinate Zn(2+): cysteine 63, cysteine 66, cysteine 92, and cysteine 95.

Belongs to the eukaryotic/archaeal RNase P protein component 4 family. As to quaternary structure, consists of a catalytic RNA component and at least 4 protein subunits. Forms a subcomplex with Rnp1 which stimulates the catalytic RNA. Zn(2+) serves as cofactor.

The protein resides in the cytoplasm. It carries out the reaction Endonucleolytic cleavage of RNA, removing 5'-extranucleotides from tRNA precursor.. Its function is as follows. Part of ribonuclease P, a protein complex that generates mature tRNA molecules by cleaving their 5'-ends. The protein is Ribonuclease P protein component 4 of Methanocaldococcus jannaschii (strain ATCC 43067 / DSM 2661 / JAL-1 / JCM 10045 / NBRC 100440) (Methanococcus jannaschii).